A 122-amino-acid chain; its full sequence is Large ribosomal subunit protein uL14 (122 aa).

The protein belongs to the universal ribosomal protein uL14 family. Part of the 50S ribosomal subunit. Forms a cluster with proteins L3 and L19. In the 70S ribosome, L14 and L19 interact and together make contacts with the 16S rRNA in bridges B5 and B8.

Binds to 23S rRNA. Forms part of two intersubunit bridges in the 70S ribosome. The chain is Large ribosomal subunit protein uL14 from Acidothermus cellulolyticus (strain ATCC 43068 / DSM 8971 / 11B).